Reading from the N-terminus, the 226-residue chain is uncharacterized protein (226 aa).

The helical transmembrane segment at 121 to 141 (YLIGNIIGLPLTIPFILIPLI) threads the bilayer.

It to yeast YDL183c.

It localises to the membrane. This is an uncharacterized protein from Schizosaccharomyces pombe (strain 972 / ATCC 24843) (Fission yeast).